Reading from the N-terminus, the 113-residue chain is UPF0251 protein Teth514_1147 (113 aa).

This sequence belongs to the UPF0251 family.

The chain is UPF0251 protein Teth514_1147 from Thermoanaerobacter sp. (strain X514).